The primary structure comprises 253 residues: MPRYKLVIEYDGSPFCGWQRQADDPTVQGAIEAAVTRFSGENARLTCAGRTDAGVHAIHQVAHLDLAKDWRTDTVRDALNAHLRPQPVAILSAETVPDSFDARHSAIRRHYRYRILNRRSPAALTRAHVWHVPWPLDADLMHDAAQRLVGRHDFSAFRAAECQANSPIRTLEQLDVARAPMALHDEIVVATAARSFLHHQVRAMVGTLMLAGCRRLAADDVAEILASGDKSRCGPLAPAAGLTFVGVDYDPGK.

Aspartate 52 serves as the catalytic Nucleophile. Tyrosine 111 contacts substrate.

Belongs to the tRNA pseudouridine synthase TruA family. As to quaternary structure, homodimer.

The catalysed reaction is uridine(38/39/40) in tRNA = pseudouridine(38/39/40) in tRNA. Its function is as follows. Formation of pseudouridine at positions 38, 39 and 40 in the anticodon stem and loop of transfer RNAs. This is tRNA pseudouridine synthase A from Methylobacterium radiotolerans (strain ATCC 27329 / DSM 1819 / JCM 2831 / NBRC 15690 / NCIMB 10815 / 0-1).